The following is a 201-amino-acid chain: MAGSFAQLARAADKARDTMLVPKTALETPPLEIHTLGADALRQPAQRIGKVNDQVRELARDMLRSMYTAKGIGLAAPQVAVYQQLLVIDLDLENAATPPLVLINPEITAASAGLDTYEEGCLSIPGVYLDVVRPTAIELSYRDEMGRPRKMKADGLMARCIQHEMDHLNGVLFVDRVTDQAGLQKELKENGFQSKHVQSVS.

Fe cation is bound by residues Cys-121 and His-163. Glu-164 is a catalytic residue. A Fe cation-binding site is contributed by His-167.

It belongs to the polypeptide deformylase family. Fe(2+) serves as cofactor.

It catalyses the reaction N-terminal N-formyl-L-methionyl-[peptide] + H2O = N-terminal L-methionyl-[peptide] + formate. In terms of biological role, removes the formyl group from the N-terminal Met of newly synthesized proteins. Requires at least a dipeptide for an efficient rate of reaction. N-terminal L-methionine is a prerequisite for activity but the enzyme has broad specificity at other positions. In Synechococcus sp. (strain CC9902), this protein is Peptide deformylase.